Consider the following 171-residue polypeptide: Large ribosomal subunit protein uL10 (171 aa).

Belongs to the universal ribosomal protein uL10 family. In terms of assembly, part of the ribosomal stalk of the 50S ribosomal subunit. The N-terminus interacts with L11 and the large rRNA to form the base of the stalk. The C-terminus forms an elongated spine to which L12 dimers bind in a sequential fashion forming a multimeric L10(L12)X complex.

Forms part of the ribosomal stalk, playing a central role in the interaction of the ribosome with GTP-bound translation factors. This is Large ribosomal subunit protein uL10 from Paramagnetospirillum magneticum (strain ATCC 700264 / AMB-1) (Magnetospirillum magneticum).